Consider the following 369-residue polypeptide: O-methyltransferase 12 (369 aa).

Residues G181, D204, 229–231, D230, F231, and K244 contribute to the S-adenosyl-L-methionine site; that span reads GDF. H248 acts as the Proton acceptor in catalysis.

The protein belongs to the class I-like SAM-binding methyltransferase superfamily. Cation-independent O-methyltransferase family. COMT subfamily.

It carries out the reaction resorcinol + S-adenosyl-L-methionine = 3-methoxyphenol + S-adenosyl-L-homocysteine + H(+). In terms of biological role, S-adenosyl-L-methionine dependent O-methyltransferase that may be involved in modifying resorcinol ring to synthesize a variant of 4-methyl-5-pentylbenzene-1,3-diol. The chain is O-methyltransferase 12 (omt12) from Dictyostelium discoideum (Social amoeba).